A 253-amino-acid polypeptide reads, in one-letter code: MVALKYVLVPVALVAAKNIVEMITFRDENGKLHRRLAPEEYRGGVLDGEESRLLQKRDLEMHPPVDLGVYFSNRPIHRTIDVPDIYLDSQISVLTELDIFASYSRNDEKSYDMFRDPESDLIVIAPTNAAITALAKKPWQFPMDIDTMEQAGSSERDIDNAIHNNIVNFVRSHVVAYQKDTKTSKDGTVLLQSKQYSMQHSNGKGGDVLLKREGEKYCVASVVDEVFHDVQNIYSTKNGVILVIDATLSRPGA.

Residues 1 to 16 (MVALKYVLVPVALVAA) form the signal peptide. The 165-residue stretch at 84 to 248 (DIYLDSQISV…GVILVIDATL (165 aa)) folds into the FAS1 domain.

The protein localises to the vacuole. This is FAS1 domain-containing protein CAGL0M08734g from Candida glabrata (strain ATCC 2001 / BCRC 20586 / JCM 3761 / NBRC 0622 / NRRL Y-65 / CBS 138) (Yeast).